Reading from the N-terminus, the 267-residue chain is L-aspartate dehydrogenase (267 aa).

The NAD(+) site is built by Ala124 and Asn190. The active site involves His218.

The protein belongs to the L-aspartate dehydrogenase family.

It catalyses the reaction L-aspartate + NADP(+) + H2O = oxaloacetate + NH4(+) + NADPH + H(+). The enzyme catalyses L-aspartate + NAD(+) + H2O = oxaloacetate + NH4(+) + NADH + H(+). It participates in cofactor biosynthesis; NAD(+) biosynthesis; iminoaspartate from L-aspartate (dehydrogenase route): step 1/1. Its function is as follows. Specifically catalyzes the NAD or NADP-dependent dehydrogenation of L-aspartate to iminoaspartate. This Methanococcus maripaludis (strain C6 / ATCC BAA-1332) protein is L-aspartate dehydrogenase.